Reading from the N-terminus, the 395-residue chain is Non-homologous end joining protein Ku (395 aa).

Residues 9 to 181 (ISFGLVSIPI…PPEDAAPDGD (173 aa)) enclose the Ku domain. Residues 252–395 (RAARTSRDDE…SASSRKRTSA (144 aa)) form a disordered region. 2 stretches are compositionally biased toward polar residues: residues 283–292 (SSKTSGQSSG) and 311–320 (GKTVTRSGDS). Residues 351-361 (TARKTTAKKTT) are compositionally biased toward basic residues. The span at 362-371 (AKGTTGTTAA) shows a compositional bias: low complexity.

This sequence belongs to the prokaryotic Ku family. In terms of assembly, homodimer. Interacts with LigD.

Its function is as follows. With LigD forms a non-homologous end joining (NHEJ) DNA repair enzyme, which repairs dsDNA breaks with reduced fidelity. Binds linear dsDNA with 5'- and 3'- overhangs but not closed circular dsDNA nor ssDNA. Recruits and stimulates the ligase activity of LigD. This is Non-homologous end joining protein Ku from Streptomyces griseus subsp. griseus (strain JCM 4626 / CBS 651.72 / NBRC 13350 / KCC S-0626 / ISP 5235).